Consider the following 82-residue polypeptide: Quinohemoprotein amine dehydrogenase subunit gamma (82 aa).

The 4-cysteinyl-glutamic acid (Cys-Glu) cross-link spans 7–16 (CTTSFDPGWE). Cross-links (3-cysteinyl-aspartic acid (Cys-Asp)) lie at residues 27–33 (CQPMEAD) and 41–49 (CWWPAQVAD). Asp-33 serves as the catalytic Proton acceptor. Positions 37–43 (CADPCWW) form a cross-link, 4'-cysteinyl-tryptophylquinone (Cys-Trp). The residue at position 43 (Trp-43) is a Tryptophylquinone.

Belongs to the quinohemoprotein amine dehydrogenase subunit gamma family. In terms of assembly, heterotrimer of an alpha, a beta and a gamma subunit. Cysteine tryptophylquinone residue is required as a cofactor. In terms of processing, the cysteine tryptophylquinone (CTQ) is generated by oxidation of the indole ring of a tryptophan residue to form tryptophylquinone, followed by covalent cross-linking with a cysteine residue.

The protein localises to the periplasm. It catalyses the reaction 2 Fe(III)-[cytochrome c550] + an aliphatic amine + H2O = 2 Fe(II)-[cytochrome c550] + an aldehyde + NH4(+) + 2 H(+). With respect to regulation, inhibited by carbonyl reagents such as hydrazine, hydroxylamine, phenylhydrazine and semicarbazide. Catalyzes the oxidative deamination of a wide range of primary aliphatic and aromatic amines. The physiological electron acceptor is the constitutive cytochrome c550. The polypeptide is Quinohemoprotein amine dehydrogenase subunit gamma (qhnDH) (Paracoccus denitrificans).